Reading from the N-terminus, the 2710-residue chain is Serine/threonine-protein kinase ATR (2710 aa).

The FAT domain maps to 1647-2257; that stretch reads TLAKASFRCQ…LWMMAAVSKS (611 aa). One can recognise a PI3K/PI4K catalytic domain in the interval 2368 to 2680; that stretch reads IADDAEILNS…GVNAAPSLPL (313 aa). Residues 2374 to 2380 are G-loop; it reads ILNSLQK. Residues 2545 to 2553 form a catalytic loop region; it reads GLGDRHGEN. Residues 2565–2589 are activation loop; it reads HVDFSCLFDKGLLLEKPEVVPFRFT. Residues 2678–2710 form the FATC domain; that stretch reads LPLSVEGQARRLIAEAVSHSNLGKMYVWWMAWF.

Belongs to the PI3/PI4-kinase family. ATM subfamily.

The protein resides in the nucleus. It carries out the reaction L-seryl-[protein] + ATP = O-phospho-L-seryl-[protein] + ADP + H(+). It catalyses the reaction L-threonyl-[protein] + ATP = O-phospho-L-threonyl-[protein] + ADP + H(+). Its function is as follows. Probable serine/threonine kinase. Seems to play a central role in cell-cycle regulation by transmitting DNA damage signals to downstream effectors of cell-cycle progression. May recognize the substrate consensus sequence [ST]-Q and phosphorylate histone variant H2AX to form H2AXS139ph at sites of DNA damage, thereby regulating DNA damage response mechanism. The polypeptide is Serine/threonine-protein kinase ATR (Oryza sativa subsp. indica (Rice)).